Consider the following 204-residue polypeptide: Peptide deformylase (204 aa).

2 residues coordinate Fe cation: C131 and H174. E175 is an active-site residue. H178 serves as a coordination point for Fe cation.

The protein belongs to the polypeptide deformylase family. It depends on Fe(2+) as a cofactor.

The catalysed reaction is N-terminal N-formyl-L-methionyl-[peptide] + H2O = N-terminal L-methionyl-[peptide] + formate. Functionally, removes the formyl group from the N-terminal Met of newly synthesized proteins. Requires at least a dipeptide for an efficient rate of reaction. N-terminal L-methionine is a prerequisite for activity but the enzyme has broad specificity at other positions. The protein is Peptide deformylase of Streptococcus mutans serotype c (strain ATCC 700610 / UA159).